A 325-amino-acid polypeptide reads, in one-letter code: Deoxyhypusine hydroxylase (325 aa).

Residue Ser2 is modified to N-acetylserine. HEAT-like PBS-type repeat units follow at residues 77-103 and 110-136; these read LKHEVAYVLGQTKNLDAAPTLRHVMLD and VRHEAAEALGALGDKDSLDDLNKAAKE. Residues His79, Glu80, His112, and Glu113 each contribute to the Fe cation site. A Phosphoserine modification is found at Ser126. Position 187 is a phosphothreonine (Thr187). HEAT-like PBS-type repeat units follow at residues 202–231, 235–261, and 268–294; these read LFQRYRAMFRLRDIGTDEAILALATGFSAE, FKHEIAYVFGQIGSPAAVPSLIEVLGR, and VRHEAAEALGAIASPEVVDVLKSYLND. Residues His237, Glu238, His270, and Glu271 each contribute to the Fe cation site. Ser281 carries the post-translational modification Phosphoserine.

Belongs to the deoxyhypusine hydroxylase family. The cofactor is Fe(2+).

It is found in the cytoplasm. The protein localises to the nucleus. The enzyme catalyses [eIF5A protein]-deoxyhypusine + AH2 + O2 = [eIF5A protein]-hypusine + A + H2O. The protein operates within protein modification; eIF5A hypusination. Catalyzes the hydroxylation of the N(6)-(4-aminobutyl)-L-lysine intermediate to form hypusine, an essential post-translational modification only found in mature eIF-5A factor. The chain is Deoxyhypusine hydroxylase from Saccharomyces cerevisiae (strain ATCC 204508 / S288c) (Baker's yeast).